The primary structure comprises 499 residues: Phenylalanine--tRNA ligase alpha subunit (499 aa).

L-phenylalanine-binding positions include Thr330, 372–374 (QVE), and Tyr412. Glu414 serves as a coordination point for Mg(2+). Residue Phe438 participates in L-phenylalanine binding.

Belongs to the class-II aminoacyl-tRNA synthetase family. Phe-tRNA synthetase alpha subunit type 2 subfamily. Tetramer of two alpha and two beta subunits. Requires Mg(2+) as cofactor.

Its subcellular location is the cytoplasm. It catalyses the reaction tRNA(Phe) + L-phenylalanine + ATP = L-phenylalanyl-tRNA(Phe) + AMP + diphosphate + H(+). The chain is Phenylalanine--tRNA ligase alpha subunit (frs2) from Schizosaccharomyces pombe (strain 972 / ATCC 24843) (Fission yeast).